The following is an 882-amino-acid chain: MPKIKSFAPAWLNEPAPGHKLFAPAADDGTATVPLAYGKKIKPGPRRTIARRGTEIFVACGKQIRWGDLAQLKESWESRPSRSSVGPTSTKKDSSDFDDGAATAGYRIIKTPVADDIRQLVMSPNQDFLAVLTSHTVHICILPDSSHLHIQDTTPFKPKFWTLGPTTHVTSRSAVVSAVWHPLGVNGHALVTVTEDAIVRVWELSTADRWTFDAPTLAIDLKKLADATYLDQDFGVSTSATNKGFSPDAFDMEVAAACFPTRDSGGWAPMTLWLAMTSGDVYALCPLLPQRWTPPPTLIPSLSASIVAKVAAAEDNPESTPEERLVAQQQLEWMSEIDNQEPKLVEEATGEATIEVYTRPSRPGLVPKLQGPFDFDLNPEDEQDDEVELKDIYVIGEKPRVADLMRGEEEELEMMKEDQHNGLSLNIICLLSTSGQVKICLDIDGVEAQWLPPRSKNKRLFAPPPEPPSLLTFQTFDTLKPAEVTPDGWPMFSEDATSPYSFYVTHPAGITYISLTPWVFRLESELQSDSEAGTEFRIDLLAKGQGSERDRIFTQTRTQSPLAAATSIDDPDLGYFILSATQTDPIALFFETPERPVVPKETSVVIPEHVEERPPSPYWEPRPLFHPAEALDKPSAVPAWIDNLRTGRRRPLLTQELRLSMATLEVFHDGHKVVSTEVSDINDAVAELFRKCEALQGELRDQIKKVNEVKNRIHTITGDDLSDDPPVSEDQLIKQRIRVARERQEELANRMERLRKKFGRTTTRELSDKEKAWIEEVQNMATSILGPEAGQGALATTPNLAKQPWKRLEEIKTLRNALMAEAEQLQKVGDDTEESTPASQMPSLKIPSEIRKAKMAQVMSLLERESALVDAVKARIERLSIG.

The segment at 76 to 98 (WESRPSRSSVGPTSTKKDSSDFD) is disordered. Coiled-coil stretches lie at residues 676–762 (TEVS…GRTT) and 806–829 (KRLE…QKVG).

As to quaternary structure, component of the nuclear pore complex (NPC). NPC constitutes the exclusive means of nucleocytoplasmic transport. NPCs allow the passive diffusion of ions and small molecules and the active, nuclear transport receptor-mediated bidirectional transport of macromolecules such as proteins, RNAs, ribonucleoparticles (RNPs), and ribosomal subunits across the nuclear envelope. Due to its 8-fold rotational symmetry, all subunits are present with 8 copies or multiples thereof.

It is found in the nucleus. The protein localises to the nuclear pore complex. Its subcellular location is the nucleus membrane. Functions as a component of the nuclear pore complex (NPC). NPC components, collectively referred to as nucleoporins (NUPs), can play the role of both NPC structural components and of docking or interaction partners for transiently associated nuclear transport factors. This is Nucleoporin NUP82 (NUP82) from Chaetomium thermophilum (strain DSM 1495 / CBS 144.50 / IMI 039719) (Thermochaetoides thermophila).